The chain runs to 154 residues: MVDVAFVCLGNICRSPMAEAIMRQRLKDRNIQDIKVHSRGTGSWNLGEPPHEGTQKILNKHNIPFDGMISELFEATDDFDYIVAMDQSNVDNIKSINPNLKGQLFKLLEFSNMEESDVPDPYYTNNFEGVYDMVLSSCDNLIDYIVKDANLKEG.

The Nucleophile role is filled by Cys8. Arg14 is an active-site residue. Asp120 functions as the Proton donor in the catalytic mechanism.

It belongs to the low molecular weight phosphotyrosine protein phosphatase family. Interacts with host CORO1A. Phosphorylations at Tyr-122 and Tyr-123 are essential for phosphatase activity.

Its subcellular location is the secreted. It carries out the reaction O-phospho-L-tyrosyl-[protein] + H2O = L-tyrosyl-[protein] + phosphate. In terms of biological role, secreted tyrosine phosphatase that plays a critical role during infection as a bacterial effector protein that counteracts host defenses. Required for intramacrophage survival. The chain is Low molecular weight protein-tyrosine-phosphatase PtpA (ptpA) from Staphylococcus aureus (strain MRSA252).